The sequence spans 317 residues: DNA repair nuclease/redox regulator APEX1 (317 aa).

Residues Met-1–Ser-58 form a disordered region. The tract at residues Pro-2–Thr-32 is necessary for interaction with YBX1, binding to RNA, association together with NPM1 to rRNA, endoribonuclease activity on abasic RNA and localization in the nucleoli. An N6-acetyllysine; by EP300 mark is found at Lys-6 and Lys-7. The Nuclear localization signal (NLS) motif lies at Ala-8–Asp-12. A compositionally biased stretch (basic and acidic residues) spans Glu-15–Ala-37. Ser-18 is subject to Phosphoserine. The interval Thr-22–Thr-32 is necessary for interaction with NPM1 and for efficient rRNA binding. Lys-26, Lys-30, Lys-31, and Lys-34 each carry N6-acetyllysine. Phosphoserine is present on Ser-53. The short motif at Ile-63 to Gly-79 is the Nuclear export signal (NES) element. S-nitrosocysteine; alternate is present on Cys-64. Cys-64 and Cys-92 form a disulfide bridge. A Mg(2+)-binding site is contributed by Asp-69. The residue at position 92 (Cys-92) is an S-nitrosocysteine; alternate. Glu-95 serves as a coordination point for Mg(2+). Tyr-170 is a catalytic residue. N6-acetyllysine is present on Lys-196. Residues Asp-209 and Asn-211 each coordinate Mg(2+). Asp-209 (proton donor/acceptor) is an active-site residue. At Thr-232 the chain carries Phosphothreonine; by CDK5. The tract at residues His-288–Leu-317 is mitochondrial targeting sequence (MTS). Asp-307 is a Mg(2+) binding site. Position 309 is an S-nitrosocysteine (Cys-309).

This sequence belongs to the DNA repair enzymes AP/ExoA family. As to quaternary structure, monomer. Homodimer; disulfide-linked. Component of the SET complex, composed of at least APEX1, SET, ANP32A, HMGB2, NME1 and TREX1. Associates with the dimer XRCC5/XRCC6 in a DNA-dependent manner. Interacts with SIRT1; the interaction is increased in the context of genotoxic stress. Interacts with HDAC1, HDAC2 and HDAC3; the interactions are not dependent on the APEX1 acetylation status. Interacts with XRCC1; the interaction is induced by SIRT1 and increased with the APEX1 acetylated form. Interacts with NPM1 (via N-terminal domain); the interaction is RNA-dependent and decreases in hydrogen peroxide-damaged cells. Interacts (via N-terminus) with YBX1 (via C-terminus); the interaction is increased in presence of APEX1 acetylated at Lys-6 and Lys-7. Interacts with HNRNPL; the interaction is DNA-dependent. Interacts (via N-terminus) with KPNA1 and KPNA2. Interacts with TXN; the interaction stimulates the FOS/JUN AP-1 complex DNA-binding activity in a redox-dependent manner. Interacts with GZMA, KRT8, MDM2, POLB, PRDX6, PRPF19, RPLP0, TOMM20 and WDR77. Binds to CDK5. Requires Mg(2+) as cofactor. The cofactor is Mn(2+). Post-translationally, phosphorylated. Phosphorylation by kinase PKC or casein kinase CK2 results in enhanced redox activity that stimulates binding of the FOS/JUN AP-1 complex to its cognate binding site. AP-endodeoxyribonuclease activity is not affected by CK2-mediated phosphorylation. Phosphorylation of Thr-232 by CDK5 in response to MPP(+)/MPTP (1-methyl-4-phenylpyridinium) reduces AP-endodeoxyribonuclease activity resulting in accumulation of DNA damage and contributing to neuronal death. Acetylated on Lys-6 and Lys-7. Acetylation is increased by the transcriptional coactivator EP300 acetyltransferase, genotoxic agents like H(2)O(2) and methyl methanesulfonate (MMS). Acetylation increases its binding affinity to the negative calcium response element (nCaRE) DNA promoter. The acetylated form induces a stronger binding of YBX1 to the Y-box sequence in the MDR1 promoter than the unacetylated form. Deacetylated on lysines. Lys-6 and Lys-7 are deacetylated by SIRT1. In terms of processing, cleaved at Lys-30 by granzyme A to create the mitochondrial form; leading in reduction of binding to DNA, AP endodeoxyribonuclease activity, redox activation of transcription factors and to enhanced cell death. Cleaved by granzyme K; leading to intracellular ROS accumulation and enhanced cell death after oxidative stress. Post-translationally, cys-64 and Cys-92 are nitrosylated in response to nitric oxide (NO) and lead to the exposure of the nuclear export signal (NES). Ubiquitinated by MDM2; leading to translocation to the cytoplasm and proteasomal degradation. Expressed in both resting and stimulated B cells stimulated to switch (at protein level).

Its subcellular location is the nucleus. The protein resides in the nucleolus. It localises to the nucleus speckle. It is found in the endoplasmic reticulum. The protein localises to the cytoplasm. Its subcellular location is the mitochondrion. The catalysed reaction is a deoxyribonucleotide-2'-deoxyribose-5'-monophosphate-DNA + H2O = a 5'-end 2'-deoxyribose-5'-monophosphate-DNA + a 3'-end 2'-deoxyribonucleotide-DNA + H(+). It catalyses the reaction Exonucleolytic cleavage in the 3'- to 5'-direction to yield nucleoside 5'-phosphates.. The enzyme catalyses a 3'-end 2'-deoxyribonucleotide-3'-phosphoglycolate-DNA + H2O = 2-phosphoglycolate + a 3'-end 2'-deoxyribonucleotide-DNA + H(+). It carries out the reaction a 3'-end 2'-deoxyribonucleotide-8-oxoguanine-DNA + H2O = 8-oxo-dGMP + a 3'-end 2'-deoxyribonucleotide-DNA + H(+). NPM1 stimulates endodeoxyribonuclease activity on double-stranded DNA with AP sites, but inhibits endoribonuclease activity on single-stranded RNA containing AP sites. Its function is as follows. Multifunctional protein that plays a central role in the cellular response to oxidative stress. The two major activities of APEX1 are DNA repair and redox regulation of transcriptional factors. Functions as an apurinic/apyrimidinic (AP) endodeoxyribonuclease in the base excision repair (BER) pathway of DNA lesions induced by oxidative and alkylating agents. Initiates repair of AP sites in DNA by catalyzing hydrolytic incision of the phosphodiester backbone immediately adjacent to the damage, generating a single-strand break with 5'-deoxyribose phosphate and 3'-hydroxyl ends. Also incises at AP sites in the DNA strand of DNA/RNA hybrids, single-stranded DNA regions of R-loop structures, and single-stranded RNA molecules. Operates at switch sites of immunoglobulin (Ig) constant regions where it mediates Ig isotype class switch recombination. Processes AP sites induced by successive action of AICDA and UNG. Generates staggered nicks in opposite DNA strands resulting in the formation of double-strand DNA breaks that are finally resolved via non-homologous end joining repair pathway. Has 3'-5' exodeoxyribonuclease activity on mismatched deoxyribonucleotides at the 3' termini of nicked or gapped DNA molecules during short-patch BER. Possesses DNA 3' phosphodiesterase activity capable of removing lesions (such as phosphoglycolate and 8-oxoguanine) blocking the 3' side of DNA strand breaks. Also acts as an endoribonuclease involved in the control of single-stranded RNA metabolism. Plays a role in regulating MYC mRNA turnover by preferentially cleaving in between UA and CA dinucleotides of the MYC coding region determinant (CRD). In association with NMD1, plays a role in the rRNA quality control process during cell cycle progression. Acts as a loading factor for POLB onto non-incised AP sites in DNA and stimulates the 5'-terminal deoxyribose 5'-phosphate (dRp) excision activity of POLB. Exerts reversible nuclear redox activity to regulate DNA binding affinity and transcriptional activity of transcriptional factors by controlling the redox status of their DNA-binding domain, such as the FOS/JUN AP-1 complex after exposure to IR. Involved in calcium-dependent down-regulation of parathyroid hormone (PTH) expression by binding to negative calcium response elements (nCaREs). Together with HNRNPL or the dimer XRCC5/XRCC6, associates with nCaRE, acting as an activator of transcriptional repression. May also play a role in the epigenetic regulation of gene expression by participating in DNA demethylation. Stimulates the YBX1-mediated MDR1 promoter activity, when acetylated at Lys-6 and Lys-7, leading to drug resistance. Plays a role in protection from granzyme-mediated cellular repair leading to cell death. Binds DNA and RNA. Associates, together with YBX1, on the MDR1 promoter. Together with NPM1, associates with rRNA. The sequence is that of DNA repair nuclease/redox regulator APEX1 (Apex1) from Mus musculus (Mouse).